The sequence spans 64 residues: QSTGGKAPECLLSNYCNNECTKVHYADKGYCCLLSCYCFGLSDDKKVLEISDSRKKYCDYTIIN.

The 59-residue stretch at 1–59 folds into the LCN-type CS-alpha/beta domain; the sequence is QSTGGKAPECLLSNYCNNECTKVHYADKGYCCLLSCYCFGLSDDKKVLEISDSRKKYCD. 4 disulfide bridges follow: Cys-10–Cys-31, Cys-16–Cys-36, Cys-20–Cys-38, and Cys-32–Cys-58.

It belongs to the long (4 C-C) scorpion toxin superfamily. Sodium channel inhibitor family. Beta subfamily. As to expression, expressed by the venom gland.

Its subcellular location is the secreted. Functionally, excitatory insect beta-toxins induce a spastic paralysis. They bind voltage-independently at site-4 of sodium channels (Nav) and shift the voltage of activation toward more negative potentials thereby affecting sodium channel activation and promoting spontaneous and repetitive firing. In vivo, this recombinant protein is lethal to Locusta migratoria larvae after injection, but has no significant effect when orally administered. Is not toxic to mice after intracerebroventricular injection. This chain is Beta-insect excitatory toxin OdTx12, found in Odontobuthus doriae (Yellow Iranian scorpion).